The chain runs to 359 residues: Probable E3 ubiquitin-protein ligase LUL4 (359 aa).

Residues 1-35 (MGISFSNNNRRRDNNNRRHLHHYPPPPPYYYLDPP) form a disordered region. Residue glycine 2 is the site of N-myristoyl glycine attachment. Residues 23–35 (YPPPPPYYYLDPP) are compositionally biased toward pro residues. The DAR2 domain stretch occupies residues 148–267 (FVFDALFDGS…GSFKVKVVKQ (120 aa)). The RING-type zinc finger occupies 302–341 (CVICMTEAKDTAVLPCRHLCMCSDCAKELRLQSNKCPICR).

Belongs to the RING-type zinc finger family. LOG2 subfamily.

It carries out the reaction S-ubiquitinyl-[E2 ubiquitin-conjugating enzyme]-L-cysteine + [acceptor protein]-L-lysine = [E2 ubiquitin-conjugating enzyme]-L-cysteine + N(6)-ubiquitinyl-[acceptor protein]-L-lysine.. It participates in protein modification; protein ubiquitination. Functionally, acts as an E3 ubiquitin-protein ligase, or as part of E3 complex, which accepts ubiquitin from specific E2 ubiquitin-conjugating enzymes and then transfers it to substrates (in vitro). The protein is Probable E3 ubiquitin-protein ligase LUL4 (LUL4) of Arabidopsis thaliana (Mouse-ear cress).